The following is a 217-amino-acid chain: Adenylate kinase (217 aa).

Position 10 to 15 (10 to 15) interacts with ATP; that stretch reads GAGKGT. Positions 30 to 59 are NMP; sequence STGDMFRAAMKEGTPLGLQAKEYIDRGDLV. AMP is bound by residues threonine 31, arginine 36, 57–59, 85–88, and glutamine 92; these read DLV and GFPR. The LID stretch occupies residues 126-163; that stretch reads GRRICRNCGATYHLVFHPPAQPGVCDKCGGELYQRPDD. Arginine 127 is an ATP binding site. Positions 130 and 133 each coordinate Zn(2+). Residue 136–137 participates in ATP binding; the sequence is TY. Residues cysteine 150 and cysteine 153 each contribute to the Zn(2+) site. AMP-binding residues include arginine 160 and arginine 171. Glutamine 199 serves as a coordination point for ATP.

The protein belongs to the adenylate kinase family. As to quaternary structure, monomer.

It is found in the cytoplasm. The catalysed reaction is AMP + ATP = 2 ADP. It functions in the pathway purine metabolism; AMP biosynthesis via salvage pathway; AMP from ADP: step 1/1. Functionally, catalyzes the reversible transfer of the terminal phosphate group between ATP and AMP. Plays an important role in cellular energy homeostasis and in adenine nucleotide metabolism. The chain is Adenylate kinase from Geobacillus thermodenitrificans (strain NG80-2).